We begin with the raw amino-acid sequence, 151 residues long: MKIVLQRVQQSHVSVNQHIVGQINQGLTLLVGISPTDTDAELQWLARKCLDLRLFPDPEGNPWQASIQDIQGEILVVSQFTLYGDCRKGRRPSFSGSAKPDQAEQIYEKFVAFLRQSGLKIETGQFGAMMQVEISNDGPVTLLLEREAKPA.

Positions 138-139 (GP) match the Gly-cisPro motif, important for rejection of L-amino acids motif.

It belongs to the DTD family. In terms of assembly, homodimer.

It localises to the cytoplasm. The catalysed reaction is glycyl-tRNA(Ala) + H2O = tRNA(Ala) + glycine + H(+). It carries out the reaction a D-aminoacyl-tRNA + H2O = a tRNA + a D-alpha-amino acid + H(+). An aminoacyl-tRNA editing enzyme that deacylates mischarged D-aminoacyl-tRNAs. Also deacylates mischarged glycyl-tRNA(Ala), protecting cells against glycine mischarging by AlaRS. Acts via tRNA-based rather than protein-based catalysis; rejects L-amino acids rather than detecting D-amino acids in the active site. By recycling D-aminoacyl-tRNA to D-amino acids and free tRNA molecules, this enzyme counteracts the toxicity associated with the formation of D-aminoacyl-tRNA entities in vivo and helps enforce protein L-homochirality. The chain is D-aminoacyl-tRNA deacylase from Picosynechococcus sp. (strain ATCC 27264 / PCC 7002 / PR-6) (Agmenellum quadruplicatum).